Reading from the N-terminus, the 144-residue chain is Transcription antitermination protein NusB (144 aa).

It belongs to the NusB family.

Functionally, involved in transcription antitermination. Required for transcription of ribosomal RNA (rRNA) genes. Binds specifically to the boxA antiterminator sequence of the ribosomal RNA (rrn) operons. The protein is Transcription antitermination protein NusB of Carboxydothermus hydrogenoformans (strain ATCC BAA-161 / DSM 6008 / Z-2901).